Reading from the N-terminus, the 206-residue chain is MSETRPDCDEVVLLGRSNVGKSTLMRELTGHTGFTTGRKPGVTRSPNHYDWASESFMFTDLPGFGFMSGVESSQREQIKTDIVRYIESNAESILAAVLVVDGKSAVEIIDRHSGPDEIPHDIELFSFLWELDLPTVVAVNKIDKVENKDNQLDDLCDRLGLYPPWQQWQDTIAPISAKRGSIEPLEEALQAIFSDQRRDDLLKFVT.

The EngB-type G domain maps to 7–195 (DCDEVVLLGR…EEALQAIFSD (189 aa)). GTP contacts are provided by residues 15–22 (GRSNVGKS), 41–45 (GVTRS), 60–63 (DLPG), 140–143 (NKID), and 175–177 (ISA). The Mg(2+) site is built by Ser-22 and Thr-43.

Belongs to the TRAFAC class TrmE-Era-EngA-EngB-Septin-like GTPase superfamily. EngB GTPase family. The cofactor is Mg(2+).

In terms of biological role, necessary for normal cell division and for the maintenance of normal septation. This is Probable GTP-binding protein EngB from Haloquadratum walsbyi (strain DSM 16790 / HBSQ001).